Reading from the N-terminus, the 341-residue chain is S-adenosylmethionine:tRNA ribosyltransferase-isomerase (341 aa).

This sequence belongs to the QueA family. Monomer.

Its subcellular location is the cytoplasm. It catalyses the reaction 7-aminomethyl-7-carbaguanosine(34) in tRNA + S-adenosyl-L-methionine = epoxyqueuosine(34) in tRNA + adenine + L-methionine + 2 H(+). It functions in the pathway tRNA modification; tRNA-queuosine biosynthesis. In terms of biological role, transfers and isomerizes the ribose moiety from AdoMet to the 7-aminomethyl group of 7-deazaguanine (preQ1-tRNA) to give epoxyqueuosine (oQ-tRNA). This chain is S-adenosylmethionine:tRNA ribosyltransferase-isomerase, found in Staphylococcus epidermidis (strain ATCC 12228 / FDA PCI 1200).